The primary structure comprises 361 residues: Phosphoserine aminotransferase (361 aa).

Position 43 (Arg-43) interacts with L-glutamate. Pyridoxal 5'-phosphate contacts are provided by residues Ala-77 to Ser-78, Trp-103, Thr-153, Asp-172, and Gln-195. Lys-196 carries the N6-(pyridoxal phosphate)lysine modification. Asn-237–Thr-238 contributes to the pyridoxal 5'-phosphate binding site.

The protein belongs to the class-V pyridoxal-phosphate-dependent aminotransferase family. SerC subfamily. In terms of assembly, homodimer. Pyridoxal 5'-phosphate is required as a cofactor.

Its subcellular location is the cytoplasm. The enzyme catalyses O-phospho-L-serine + 2-oxoglutarate = 3-phosphooxypyruvate + L-glutamate. It carries out the reaction 4-(phosphooxy)-L-threonine + 2-oxoglutarate = (R)-3-hydroxy-2-oxo-4-phosphooxybutanoate + L-glutamate. It functions in the pathway amino-acid biosynthesis; L-serine biosynthesis; L-serine from 3-phospho-D-glycerate: step 2/3. The protein operates within cofactor biosynthesis; pyridoxine 5'-phosphate biosynthesis; pyridoxine 5'-phosphate from D-erythrose 4-phosphate: step 3/5. In terms of biological role, catalyzes the reversible conversion of 3-phosphohydroxypyruvate to phosphoserine and of 3-hydroxy-2-oxo-4-phosphonooxybutanoate to phosphohydroxythreonine. This chain is Phosphoserine aminotransferase, found in Desulfotalea psychrophila (strain LSv54 / DSM 12343).